The sequence spans 408 residues: Imidazolonepropionase (408 aa).

Residues H73 and H75 each contribute to the Fe(3+) site. Positions 73 and 75 each coordinate Zn(2+). 3 residues coordinate 4-imidazolone-5-propanoate: R82, Y145, and H178. Y145 serves as a coordination point for N-formimidoyl-L-glutamate. H243 serves as a coordination point for Fe(3+). H243 contributes to the Zn(2+) binding site. Q246 provides a ligand contact to 4-imidazolone-5-propanoate. D318 contributes to the Fe(3+) binding site. D318 is a Zn(2+) binding site. 2 residues coordinate N-formimidoyl-L-glutamate: N320 and G322. 4-imidazolone-5-propanoate is bound at residue S323.

This sequence belongs to the metallo-dependent hydrolases superfamily. HutI family. Requires Zn(2+) as cofactor. Fe(3+) is required as a cofactor.

The protein localises to the cytoplasm. It catalyses the reaction 4-imidazolone-5-propanoate + H2O = N-formimidoyl-L-glutamate. It functions in the pathway amino-acid degradation; L-histidine degradation into L-glutamate; N-formimidoyl-L-glutamate from L-histidine: step 3/3. Functionally, catalyzes the hydrolytic cleavage of the carbon-nitrogen bond in imidazolone-5-propanoate to yield N-formimidoyl-L-glutamate. It is the third step in the universal histidine degradation pathway. The sequence is that of Imidazolonepropionase from Shewanella sp. (strain MR-4).